The following is a 406-amino-acid chain: Pygopus homolog 2 (406 aa).

Disordered regions lie at residues 1-73 (MAAS…DHLV) and 106-323 (VQGG…PQPP). Alanine 2 is subject to N-acetylalanine. Phosphoserine is present on serine 40. The short motif at 41–47 (PEKKRRK) is the Nuclear localization signal element. 2 stretches are compositionally biased toward pro residues: residues 131 to 141 (RQPPPFPPNPM) and 149 to 158 (PQGPGYPPPG). Polar residues predominate over residues 164-179 (SQPFNQPLGQNFSPPS). Residues 236 to 252 (SLPPNTSPFPGPDPGFP) are compositionally biased toward pro residues. Residues 285–296 (NGNQPSFPPNSS) are compositionally biased toward polar residues. Threonine 302 is subject to Phosphothreonine. The segment at 327-385 (VYPCGACRSEVNDDQDAILCEASCQKWFHRECTGMTESAYGLLTTEASAVWACDLCLKT) adopts a PHD-type zinc-finger fold.

In terms of assembly, binds to BCL9 via the PHD-type zinc finger motif, and thereby becomes part of the nuclear beta-catenin/TCF complex.

Its subcellular location is the nucleus. Involved in signal transduction through the Wnt pathway. In Homo sapiens (Human), this protein is Pygopus homolog 2 (PYGO2).